Consider the following 338-residue polypeptide: 26S proteasome regulatory subunit RPN8 (338 aa).

Ser2 is modified (N-acetylserine). The MPN domain maps to Val8–Val143. Positions Ile301–Ala326 are enriched in basic and acidic residues. The segment at Ile301–Asn338 is disordered. Ser314, Ser317, and Ser319 each carry phosphoserine. A Phosphothreonine modification is found at Thr327.

It belongs to the peptidase M67A family. Post-translationally, N-acetylated by NAT1.

In terms of biological role, acts as a regulatory subunit of the 26S proteasome which is involved in the ATP-dependent degradation of ubiquitinated proteins. In Saccharomyces cerevisiae (strain ATCC 204508 / S288c) (Baker's yeast), this protein is 26S proteasome regulatory subunit RPN8 (RPN8).